The sequence spans 238 residues: Small proline-rich protein 3 (238 aa).

Positions 1 to 67 (MSSYQQKQPF…CSTKVPEPGN (67 aa)) are disordered. The residue at position 2 (Ser-2) is an N-acetylserine. Repeat copies occupy residues 52–59 (TKIPEPCS), 60–67 (TKVPEPGN), 68–75 (TVVLEPDY), 76–83 (TTMPGPCS), 84–91 (TNITEPDY), 92–99 (TTIPGPCS), 100–107 (TNITEPDY), 108–115 (TTIPGPCS), 116–123 (TNIPGPDR), 124–131 (TVVPGSCS), 132–139 (TNITEPDY), 140–147 (TTIPGPSS), 148–155 (TKIPDPGC), 156–163 (AMVPGPSP), 164–175 (SSTSEPSSEPCS), 176–183 (INVREPGY), 184–191 (MNASEPTH), 192–199 (AKVPDQGY), 200–207 (TKIPDQGS), 208–215 (SKVPEPCQ), and 216–223 (SRVPEVCP). Positions 52–223 (TKIPEPCSTK…CQSRVPEVCP (172 aa)) are 21 X 8 AA approximate tandem repeats. Residues 110-238 (IPGPCSTNIP…VSAKQKTKQK (129 aa)) form a disordered region. Low complexity predominate over residues 163-175 (PSSTSEPSSEPCS).

Belongs to the cornifin (SPRR) family.

The protein localises to the cytoplasm. Its function is as follows. Cross-linked envelope protein of keratinocytes. This is Small proline-rich protein 3 (Sprr3) from Mus musculus (Mouse).